A 126-amino-acid polypeptide reads, in one-letter code: Fluoride-specific ion channel FluC (126 aa).

The next 4 helical transmembrane spans lie at F6 to L26, Y36 to F56, L69 to V89, and W99 to L119. The Na(+) site is built by G76 and T79.

Belongs to the fluoride channel Fluc/FEX (TC 1.A.43) family.

It localises to the cell inner membrane. It catalyses the reaction fluoride(in) = fluoride(out). Its activity is regulated as follows. Na(+) is not transported, but it plays an essential structural role and its presence is essential for fluoride channel function. Its function is as follows. Fluoride-specific ion channel. Important for reducing fluoride concentration in the cell, thus reducing its toxicity. This chain is Fluoride-specific ion channel FluC, found in Cupriavidus taiwanensis (strain DSM 17343 / BCRC 17206 / CCUG 44338 / CIP 107171 / LMG 19424 / R1) (Ralstonia taiwanensis (strain LMG 19424)).